The following is a 774-amino-acid chain: Fatty acid oxidation complex subunit alpha (774 aa).

2 disordered regions span residues 1–31 (MSKE…VGAS) and 617–641 (YLYS…RNSF). The tract at residues 1-224 (MSKENIVTRE…KMGLVDDVVP (224 aa)) is enoyl-CoA hydratase. 2 stretches are compositionally biased toward polar residues: residues 8–31 (TREN…VGAS) and 620–637 (SNPT…SPAK). A 3-hydroxyacyl-CoA dehydrogenase region spans residues 340 to 774 (RAIHRVGVLG…NIDEVTDVAS (435 aa)).

The protein in the N-terminal section; belongs to the enoyl-CoA hydratase/isomerase family. This sequence in the central section; belongs to the 3-hydroxyacyl-CoA dehydrogenase family. As to quaternary structure, heterotetramer of two alpha chains (FadJ) and two beta chains (FadI).

It localises to the cytoplasm. The enzyme catalyses a (3S)-3-hydroxyacyl-CoA = a (2E)-enoyl-CoA + H2O. The catalysed reaction is a 4-saturated-(3S)-3-hydroxyacyl-CoA = a (3E)-enoyl-CoA + H2O. It carries out the reaction a (3S)-3-hydroxyacyl-CoA + NAD(+) = a 3-oxoacyl-CoA + NADH + H(+). It catalyses the reaction (3S)-3-hydroxybutanoyl-CoA = (3R)-3-hydroxybutanoyl-CoA. Its pathway is lipid metabolism; fatty acid beta-oxidation. In terms of biological role, catalyzes the formation of a hydroxyacyl-CoA by addition of water on enoyl-CoA. Also exhibits 3-hydroxyacyl-CoA epimerase and 3-hydroxyacyl-CoA dehydrogenase activities. The polypeptide is Fatty acid oxidation complex subunit alpha (Yersinia pestis (strain Pestoides F)).